Reading from the N-terminus, the 232-residue chain is 7-cyano-7-deazaguanine synthase (232 aa).

Cys7 to Ala17 is an ATP binding site. Cys185, Cys193, Cys196, and Cys199 together coordinate Zn(2+).

This sequence belongs to the QueC family. Zn(2+) is required as a cofactor.

The catalysed reaction is 7-carboxy-7-deazaguanine + NH4(+) + ATP = 7-cyano-7-deazaguanine + ADP + phosphate + H2O + H(+). Its pathway is purine metabolism; 7-cyano-7-deazaguanine biosynthesis. Its function is as follows. Catalyzes the ATP-dependent conversion of 7-carboxy-7-deazaguanine (CDG) to 7-cyano-7-deazaguanine (preQ(0)). In Chelativorans sp. (strain BNC1), this protein is 7-cyano-7-deazaguanine synthase.